Reading from the N-terminus, the 502-residue chain is Lysine--tRNA ligase (502 aa).

E412 and E419 together coordinate Mg(2+).

The protein belongs to the class-II aminoacyl-tRNA synthetase family. In terms of assembly, homodimer. Requires Mg(2+) as cofactor.

It is found in the cytoplasm. The enzyme catalyses tRNA(Lys) + L-lysine + ATP = L-lysyl-tRNA(Lys) + AMP + diphosphate. The protein is Lysine--tRNA ligase of Buchnera aphidicola subsp. Cinara cedri (strain Cc).